The following is a 138-amino-acid chain: Transcriptional activator protein Pur-alpha (138 aa).

Phosphoserine is present on Ser70.

This sequence belongs to the PUR DNA-binding protein family. In terms of assembly, homodimer, heterodimer with PURB and heterotrimer with PURB and YBX1/Y-box protein 1. Interacts with FMR1; this interaction occurs in association with polyribosome.

It localises to the nucleus. Its function is as follows. This is a probable transcription activator that specifically binds the purine-rich single strand of the PUR element located upstream of the c-Myc gene. May play a role in the initiation of DNA replication and in recombination. The polypeptide is Transcriptional activator protein Pur-alpha (Rattus norvegicus (Rat)).